Consider the following 367-residue polypeptide: tRNA-specific 2-thiouridylase MnmA (367 aa).

Residues 12–19 and Met38 each bind ATP; that span reads GMSGGVDS. An interaction with target base in tRNA region spans residues 98-100; the sequence is NPD. Residue Cys103 is the Nucleophile of the active site. Cys103 and Cys200 are joined by a disulfide. Gly128 serves as a coordination point for ATP. Positions 150–152 are interaction with tRNA; sequence KDQ. Cys200 acts as the Cysteine persulfide intermediate in catalysis. The interval 312–313 is interaction with tRNA; it reads RY.

It belongs to the MnmA/TRMU family.

The protein localises to the cytoplasm. It catalyses the reaction S-sulfanyl-L-cysteinyl-[protein] + uridine(34) in tRNA + AH2 + ATP = 2-thiouridine(34) in tRNA + L-cysteinyl-[protein] + A + AMP + diphosphate + H(+). Functionally, catalyzes the 2-thiolation of uridine at the wobble position (U34) of tRNA, leading to the formation of s(2)U34. The protein is tRNA-specific 2-thiouridylase MnmA of Psychromonas ingrahamii (strain DSM 17664 / CCUG 51855 / 37).